A 39-amino-acid polypeptide reads, in one-letter code: Gas vesicle protein C (39 aa).

It belongs to the gas vesicle GvpC family.

It localises to the gas vesicle. In terms of biological role, confers stability, involved in shaping gas vesicles, hollow, gas filled proteinaceous nanostructures. During planktonic growth they allow positioning of the organism at a favorable depth for light or nutrient acquisition. This chain is Gas vesicle protein C, found in Spirulina sp. (strain CCAP 1475/10).